We begin with the raw amino-acid sequence, 63 residues long: Cecropin-B (63 aa).

Positions 1–22 (MNFNKIFVFVALILAISLGNTE) are cleaved as a signal peptide. At Arg-62 the chain carries Arginine amide.

Belongs to the cecropin family.

The protein localises to the secreted. Cecropins have lytic and antibacterial activity against several Gram-positive and Gram-negative bacteria. The sequence is that of Cecropin-B (CecB) from Drosophila simulans (Fruit fly).